The following is a 380-amino-acid chain: Erythronate-4-phosphate dehydrogenase (380 aa).

The substrate site is built by S45 and T66. Residues D146, T174, 205–207 (ASR), and D231 contribute to the NAD(+) site. Residue R207 is part of the active site. E236 is a catalytic residue. H253 acts as the Proton donor in catalysis. An NAD(+)-binding site is contributed by G256. Residue Y257 coordinates substrate.

This sequence belongs to the D-isomer specific 2-hydroxyacid dehydrogenase family. PdxB subfamily. As to quaternary structure, homodimer.

Its subcellular location is the cytoplasm. It carries out the reaction 4-phospho-D-erythronate + NAD(+) = (R)-3-hydroxy-2-oxo-4-phosphooxybutanoate + NADH + H(+). Its pathway is cofactor biosynthesis; pyridoxine 5'-phosphate biosynthesis; pyridoxine 5'-phosphate from D-erythrose 4-phosphate: step 2/5. Catalyzes the oxidation of erythronate-4-phosphate to 3-hydroxy-2-oxo-4-phosphonooxybutanoate. In Pseudomonas putida (strain ATCC 700007 / DSM 6899 / JCM 31910 / BCRC 17059 / LMG 24140 / F1), this protein is Erythronate-4-phosphate dehydrogenase.